The chain runs to 121 residues: Large ribosomal subunit protein bL20 (121 aa).

Belongs to the bacterial ribosomal protein bL20 family.

In terms of biological role, binds directly to 23S ribosomal RNA and is necessary for the in vitro assembly process of the 50S ribosomal subunit. It is not involved in the protein synthesizing functions of that subunit. This is Large ribosomal subunit protein bL20 from Wolbachia pipientis subsp. Culex pipiens (strain wPip).